The chain runs to 480 residues: Alpha,alpha-trehalose-phosphate synthase [UDP-forming] 2 (480 aa).

Positions 97 and 151 each coordinate D-glucose 6-phosphate. 2 residues coordinate UDP: Arg288 and Lys293. 2 residues coordinate UDP-alpha-D-glucose: Arg288 and Lys293. Position 326 (Arg326) interacts with D-glucose 6-phosphate. Residue 387-395 coordinates UDP-alpha-D-glucose; that stretch reads DGMNLVSFE. 391–395 lines the UDP pocket; the sequence is LVSFE.

This sequence belongs to the glycosyltransferase 20 family.

The enzyme catalyses D-glucose 6-phosphate + UDP-alpha-D-glucose = alpha,alpha-trehalose 6-phosphate + UDP + H(+). It functions in the pathway carbohydrate biosynthesis. Functionally, synthase catalytic subunit of the trehalose synthase complex that catalyzes the production of trehalose from glucose-6-phosphate and UDP-alpha-D-glucose in a two step process. The polypeptide is Alpha,alpha-trehalose-phosphate synthase [UDP-forming] 2 (Aspergillus niger).